The chain runs to 173 residues: Photosystem I assembly protein Ycf3 (173 aa).

TPR repeat units lie at residues 35–68 (AYVYYRDGLSAQNAGDYAEALENYEESLKLEESP), 72–105 (SETLKNMAIIYMSNGDEDLALDTYQRALDQNSNQ), and 120–153 (GRTAQEAGLQDEADRLFDRAADVWTQAVRLYPGG).

This sequence belongs to the Ycf3 family.

The protein resides in the cellular thylakoid membrane. Functionally, essential for the assembly of the photosystem I (PSI) complex. May act as a chaperone-like factor to guide the assembly of the PSI subunits. This Prochlorococcus marinus (strain MIT 9313) protein is Photosystem I assembly protein Ycf3.